The sequence spans 413 residues: Serine--tRNA ligase (413 aa).

221-223 provides a ligand contact to L-serine; it reads TAE. ATP is bound at residue 252-254; it reads RRE. Residue Glu275 participates in L-serine binding. Residue 339–342 participates in ATP binding; the sequence is EVSS. Ser375 is an L-serine binding site.

The protein belongs to the class-II aminoacyl-tRNA synthetase family. Type-1 seryl-tRNA synthetase subfamily. In terms of assembly, homodimer. The tRNA molecule binds across the dimer.

It is found in the cytoplasm. It carries out the reaction tRNA(Ser) + L-serine + ATP = L-seryl-tRNA(Ser) + AMP + diphosphate + H(+). The enzyme catalyses tRNA(Sec) + L-serine + ATP = L-seryl-tRNA(Sec) + AMP + diphosphate + H(+). It functions in the pathway aminoacyl-tRNA biosynthesis; selenocysteinyl-tRNA(Sec) biosynthesis; L-seryl-tRNA(Sec) from L-serine and tRNA(Sec): step 1/1. Catalyzes the attachment of serine to tRNA(Ser). Is also able to aminoacylate tRNA(Sec) with serine, to form the misacylated tRNA L-seryl-tRNA(Sec), which will be further converted into selenocysteinyl-tRNA(Sec). The sequence is that of Serine--tRNA ligase from Dehalococcoides mccartyi (strain ATCC BAA-2100 / JCM 16839 / KCTC 5957 / BAV1).